A 393-amino-acid chain; its full sequence is UDP-sulfoquinovose synthase (393 aa).

NAD(+) contacts are provided by residues 31–35 (DNLST), 74–75 (DI), Arg100, and Asn118. Arg100 contacts substrate. Residues Thr144 and Tyr182 each coordinate substrate. Thr144 is a catalytic residue. The NAD(+) site is built by Tyr182 and Lys186. Tyr182 (proton acceptor) is an active-site residue. Residue Lys186 is part of the active site. Residue Gln209 participates in substrate binding. Val212 lines the NAD(+) pocket. Substrate-binding positions include 238-241 (VVNR), 253-255 (TVY), and 326-328 (RVE).

This sequence belongs to the NAD(P)-dependent epimerase/dehydratase family. The cofactor is NAD(+).

It carries out the reaction sulfite + UDP-alpha-D-glucose + H(+) = UDP-alpha-D-6-sulfoquinovose + H2O. In terms of biological role, catalyzes the biosynthesis of UDP-sulfoquinovose by the transfer of sulfite to UDP-glucose. Important for the assembly of the S-layer N-glycans. The reaction probably occurs through an NAD(+)-dependent oxidation/dehydration/enolization/sulfite addition process. In vitro, in the absence of sulfite, UDP-D-glucose is converted via UDP-4-keto-D-glucose to UDP-D-glucose-5,6-ene. The sequence is that of UDP-sulfoquinovose synthase from Sulfolobus acidocaldarius (strain ATCC 33909 / DSM 639 / JCM 8929 / NBRC 15157 / NCIMB 11770).